A 105-amino-acid polypeptide reads, in one-letter code: Thioredoxin (105 aa).

In terms of domain architecture, Thioredoxin spans 2 to 105 (VKQIDSKDAF…KLEATINEFV (104 aa)). Position 3 is an N6-acetyllysine (Lys3). At Lys8 the chain carries N6-succinyllysine. Active-site nucleophile residues include Cys32 and Cys35. A disulfide bridge links Cys32 with Cys35. The residue at position 39 (Lys39) is an N6-acetyllysine. Residues Cys62 and Cys69 each carry the S-nitrosocysteine modification. Cys73 carries the post-translational modification S-nitrosocysteine; alternate. Lys94 is subject to N6-acetyllysine; alternate. Lys94 is modified (N6-succinyllysine; alternate).

This sequence belongs to the thioredoxin family. Homodimer; disulfide-linked. Interacts with TXNIP through the redox-active site. Interacts with MAP3K5 and CASP3. Interacts with APEX1; the interaction stimulates the FOS/JUN AP-1 DNA-binding activity in a redox-dependent manner. In the fully reduced protein, both Cys-69 and Cys-73 are nitrosylated in response to nitric oxide (NO). When two disulfide bonds are present in the protein, only Cys-73 is nitrosylated. Cys-73 can serve as donor for nitrosylation of target proteins.

The protein resides in the nucleus. The protein localises to the cytoplasm. It localises to the secreted. Its function is as follows. Participates in various redox reactions through the reversible oxidation of its active center dithiol to a disulfide and catalyzes dithiol-disulfide exchange reactions. Plays a role in the reversible S-nitrosylation of cysteine residues in target proteins, and thereby contributes to the response to intracellular nitric oxide. Nitrosylates the active site Cys of CASP3 in response to nitric oxide (NO), and thereby inhibits caspase-3 activity. Induces the FOS/JUN AP-1 DNA binding activity in ionizing radiation (IR) cells through its oxidation/reduction status and stimulates AP-1 transcriptional activity. The polypeptide is Thioredoxin (TXN) (Callithrix jacchus (White-tufted-ear marmoset)).